The sequence spans 92 residues: RQC P-site tRNA stabilizing factor (92 aa).

In terms of domain architecture, S4 RNA-binding spans 5–65 (MRLDKYLKVS…GPKIVTAKIE (61 aa)).

It belongs to the RqcP family. In terms of assembly, associates with stalled 50S ribosomal subunits. Binds to RqcH, 23S rRNA and the P-site tRNA. Does not require RqcH for association with 50S subunits.

Its function is as follows. Key component of the ribosome quality control system (RQC), a ribosome-associated complex that mediates the extraction of incompletely synthesized nascent chains from stalled ribosomes and their subsequent degradation. RqcH recruits Ala-charged tRNA, and with RqcP directs the elongation of stalled nascent chains on 50S ribosomal subunits, leading to non-templated C-terminal alanine extensions (Ala tail). The Ala tail promotes nascent chain degradation. RqcP is associated with the translocation-like movement of the peptidyl-tRNA from the A-site into the P-site. The sequence is that of RQC P-site tRNA stabilizing factor from Listeria innocua serovar 6a (strain ATCC BAA-680 / CLIP 11262).